The primary structure comprises 658 residues: DNA mismatch repair protein MutL (658 aa).

Over residues 114 to 130 (RQEDSSHATQVKAEDGK) the composition is skewed to basic and acidic residues. Disordered stretches follow at residues 114-138 (RQEDSSHATQVKAEDGKLSSPTAAA) and 353-405 (PMPS…HSLS). The segment covering 361–372 (ENLFDSASNHPT) has biased composition (polar residues).

Belongs to the DNA mismatch repair MutL/HexB family.

In terms of biological role, this protein is involved in the repair of mismatches in DNA. It is required for dam-dependent methyl-directed DNA mismatch repair. May act as a 'molecular matchmaker', a protein that promotes the formation of a stable complex between two or more DNA-binding proteins in an ATP-dependent manner without itself being part of a final effector complex. The protein is DNA mismatch repair protein MutL of Neisseria gonorrhoeae (strain NCCP11945).